Consider the following 307-residue polypeptide: Protoheme IX farnesyltransferase (307 aa).

The next 8 helical transmembrane spans lie at valine 32–proline 52, leucine 54–phenylalanine 74, leucine 105–tryptophan 125, leucine 126–leucine 146, tryptophan 169–leucine 189, valine 222–isoleucine 242, valine 244–tyrosine 264, and glycine 287–phenylalanine 307.

Belongs to the UbiA prenyltransferase family. Protoheme IX farnesyltransferase subfamily.

Its subcellular location is the cell membrane. The catalysed reaction is heme b + (2E,6E)-farnesyl diphosphate + H2O = Fe(II)-heme o + diphosphate. The protein operates within porphyrin-containing compound metabolism; heme O biosynthesis; heme O from protoheme: step 1/1. Functionally, converts heme B (protoheme IX) to heme O by substitution of the vinyl group on carbon 2 of heme B porphyrin ring with a hydroxyethyl farnesyl side group. This Leifsonia xyli subsp. xyli (strain CTCB07) protein is Protoheme IX farnesyltransferase.